The sequence spans 183 residues: Pyruvoyl-dependent arginine decarboxylase (183 aa).

The residue at position 44 (serine 44) is a Pyruvic acid (Ser).

Belongs to the PdaD family. Requires pyruvate as cofactor.

It carries out the reaction L-arginine + H(+) = agmatine + CO2. In Nitrosopumilus maritimus (strain SCM1), this protein is Pyruvoyl-dependent arginine decarboxylase.